Reading from the N-terminus, the 265-residue chain is 4-hydroxy-tetrahydrodipicolinate reductase (265 aa).

NAD(+) contacts are provided by residues 7–12 (GASGRM) and aspartate 33. An NADP(+)-binding site is contributed by arginine 34. Residues 96 to 98 (GTT) and 120 to 123 (AANM) each bind NAD(+). Histidine 153 serves as the catalytic Proton donor/acceptor. Histidine 154 serves as a coordination point for (S)-2,3,4,5-tetrahydrodipicolinate. Residue lysine 157 is the Proton donor of the active site. Residue 163–164 (GT) participates in (S)-2,3,4,5-tetrahydrodipicolinate binding.

Belongs to the DapB family.

It is found in the cytoplasm. It catalyses the reaction (S)-2,3,4,5-tetrahydrodipicolinate + NAD(+) + H2O = (2S,4S)-4-hydroxy-2,3,4,5-tetrahydrodipicolinate + NADH + H(+). The catalysed reaction is (S)-2,3,4,5-tetrahydrodipicolinate + NADP(+) + H2O = (2S,4S)-4-hydroxy-2,3,4,5-tetrahydrodipicolinate + NADPH + H(+). It participates in amino-acid biosynthesis; L-lysine biosynthesis via DAP pathway; (S)-tetrahydrodipicolinate from L-aspartate: step 4/4. Its function is as follows. Catalyzes the conversion of 4-hydroxy-tetrahydrodipicolinate (HTPA) to tetrahydrodipicolinate. The sequence is that of 4-hydroxy-tetrahydrodipicolinate reductase from Burkholderia ambifaria (strain ATCC BAA-244 / DSM 16087 / CCUG 44356 / LMG 19182 / AMMD) (Burkholderia cepacia (strain AMMD)).